The sequence spans 483 residues: Protein DETOXIFICATION 6 (483 aa).

A run of 12 helical transmembrane segments spans residues 38 to 58 (ALPM…SVMV), 69 to 89 (GVAL…FGLA), 113 to 133 (FSAI…WFYM), 146 to 166 (ISKV…AQAV), 187 to 207 (AITT…AFGL), 211 to 231 (GAAL…ALYV), 263 to 283 (AAMT…SGLL), 292 to 312 (VLSI…GIGA), 334 to 354 (VFAG…LLFI), 376 to 396 (LSPL…LGGV), 405 to 425 (IGAW…GLFL), and 436 to 456 (LWIG…IVTA).

Belongs to the multi antimicrobial extrusion (MATE) (TC 2.A.66.1) family.

The protein resides in the membrane. This Arabidopsis thaliana (Mouse-ear cress) protein is Protein DETOXIFICATION 6.